A 128-amino-acid chain; its full sequence is Probable cystatin-15 (128 aa).

The N-terminal stretch at 1–20 (MFWKLPLLLGLLALGPHVCS) is a signal peptide. A disulfide bridge links Cys82 with Cys92. Asn104 is a glycosylation site (N-linked (GlcNAc...) asparagine). Cys105 and Cys125 are joined by a disulfide.

Belongs to the cystatin family.

The protein localises to the secreted. The polypeptide is Probable cystatin-15 (Bos taurus (Bovine)).